A 1055-amino-acid polypeptide reads, in one-letter code: Sodium/potassium exporting P-type ATPase 1 (1055 aa).

The Cytoplasmic segment spans residues 1 to 73; the sequence is MTPSIGYVDE…GADEKISISK (73 aa). A helical transmembrane segment spans residues 74–94; sequence ILAHQIFNAMVLVLIISLIIA. At 95–99 the chain is on the extracellular side; it reads LAIKD. The helical transmembrane segment at 100 to 120 threads the bilayer; sequence WISGGVIGFVVFINIFVGFIQ. The Cytoplasmic segment spans residues 121-298; it reads ELKAEKTMGS…TNVGTPLQRK (178 aa). Residues 299-319 traverse the membrane as a helical segment; the sequence is LSWLAILLFWVAVLFAIVVMA. Topologically, residues 320-328 are extracellular; sequence SQEMRVNRN. Residues 329–349 form a helical membrane-spanning segment; the sequence is VAIYAICVALSMIPSSLVVVL. Residues 350-789 are Cytoplasmic-facing; it reads TITMAIGAQV…RMSSNIQKFV (440 aa). The active-site 4-aspartylphosphate intermediate is aspartate 385. Positions 385 and 387 each coordinate Mg(2+). ATP contacts are provided by threonine 387, glutamate 491, lysine 544, arginine 586, threonine 646, glycine 647, aspartate 648, arginine 705, and lysine 711. Aspartate 730 lines the Mg(2+) pocket. Asparagine 733 lines the ATP pocket. Residues 790 to 810 form a helical membrane-spanning segment; sequence LQLLAENVAQALYLMIGLAFI. Residues 811-816 lie on the Extracellular side of the membrane; sequence DKSGYS. Residues 817–837 traverse the membrane as a helical segment; the sequence is VFPLSPVEVLWIIVVTSCFPA. The Cytoplasmic portion of the chain corresponds to 838–866; that stretch reads MGLGQEKASHDILEQPPNATIFTWEVIID. A helical membrane pass occupies residues 867-887; the sequence is MIAYGFWMAVCCLVCFVCIVY. Over 888-913 the chain is Extracellular; that stretch reads GKGDGSLGENCNEGSDTGCNLVFRGR. A helical transmembrane segment spans residues 914–934; the sequence is SGAFAAFTWCALLLAWECIHL. The Cytoplasmic segment spans residues 935 to 962; the sequence is RLSFFKMRPELENPWWKQLAIDLWDNQF. Residues 963–983 form a helical membrane-spanning segment; sequence LFWSVMGAIVSVFPVVYIPVI. Residues 984–990 are Extracellular-facing; that stretch reads NNKVFLH. Residues 991–1011 form a helical membrane-spanning segment; that stretch reads APIGYEWGLAVAFTILFLIGA. Topologically, residues 1012–1055 are cytoplasmic; sequence EGWKWFKRVYYRKSNANNPEYDLERNDPFKEYSSFSKSNTMEIV.

It belongs to the cation transport ATPase (P-type) (TC 3.A.3) family. Type IID subfamily. Mg(2+) is required as a cofactor. Post-translationally, the active site is phosphorylated in presence of sodium or potassium and in conditions of higher pH. Not phosphorylated in presence of calcium ions.

The protein resides in the cell membrane. It catalyses the reaction Na(+)(in) + ATP + H2O = Na(+)(out) + ADP + phosphate + H(+). It carries out the reaction K(+)(in) + ATP + H2O = K(+)(out) + ADP + phosphate + H(+). Catalyzes the hydrolysis of ATP coupled with the export of sodium and potassium from the cell. May be an inefficient potassium exporter. May transport other cations such as lithium. Sodium/potassium efflux ATPases are involved in salt tolerance and maintaining the membrane potential across the plasma membrane in high salinity (Na+) or alkaline (K+) environments. In Schwanniomyces occidentalis (Yeast), this protein is Sodium/potassium exporting P-type ATPase 1.